The following is a 377-amino-acid chain: Lactosylceramide 1,3-N-acetyl-beta-D-glucosaminyltransferase (377 aa).

The Cytoplasmic portion of the chain corresponds to methionine 1–glutamine 14. The helical; Signal-anchor for type II membrane protein transmembrane segment at phenylalanine 15–asparagine 35 threads the bilayer. At asparagine 36–alanine 377 the chain is on the lumenal side. Residue asparagine 58 is glycosylated (N-linked (GlcNAc...) asparagine).

Belongs to the glycosyltransferase 31 family.

It localises to the golgi apparatus membrane. The enzyme catalyses a beta-D-Gal-(1-&gt;4)-beta-D-Glc-(1&lt;-&gt;1)-Cer(d18:1(4E)) + UDP-N-acetyl-alpha-D-glucosamine = a beta-D-GlcNAc-(1-&gt;3)-beta-D-Gal-(1-&gt;4)-beta-D-Glc-(1&lt;-&gt;1)-Cer(d18:1(4E)) + UDP + H(+). It carries out the reaction a neolactoside nLc4Cer(d18:1(4E)) + UDP-N-acetyl-alpha-D-glucosamine = a neolactoside IV(3)-beta-GlcNAc-nLc4Cer(d18:1(4E)) + UDP + H(+). Its pathway is protein modification; protein glycosylation. In terms of biological role, beta-1,3-N-acetylglucosaminyltransferase that plays a key role in the synthesis of lacto- or neolacto-series carbohydrate chains on glycolipids, notably by participating in biosynthesis of HNK-1 and Lewis X carbohydrate structures. Has strong activity toward lactosylceramide (LacCer) and neolactotetraosylceramide (nLc(4)Cer; paragloboside), resulting in the synthesis of Lc(3)Cer and neolactopentaosylceramide (nLc(5)Cer), respectively. Probably plays a central role in regulating neolacto-series glycolipid synthesis during embryonic development. This Rattus norvegicus (Rat) protein is Lactosylceramide 1,3-N-acetyl-beta-D-glucosaminyltransferase.